We begin with the raw amino-acid sequence, 39 residues long: Small basic protein 1 (39 aa).

Position 1 is a pyrrolidone carboxylic acid (Q1). 3 disulfides stabilise this stretch: C6/C32, C10/C26, and C14/C31.

It is found in the secreted. The polypeptide is Small basic protein 1 (Anas platyrhynchos (Mallard)).